The primary structure comprises 183 residues: Shikimate kinase (183 aa).

18–23 contacts ATP; the sequence is GVGKTT. Threonine 22 serves as a coordination point for Mg(2+). Residues aspartate 40, arginine 64, and glycine 86 each contribute to the substrate site. Arginine 125 serves as a coordination point for ATP. Arginine 143 lines the substrate pocket.

Belongs to the shikimate kinase family. In terms of assembly, monomer. The cofactor is Mg(2+).

Its subcellular location is the cytoplasm. The enzyme catalyses shikimate + ATP = 3-phosphoshikimate + ADP + H(+). It participates in metabolic intermediate biosynthesis; chorismate biosynthesis; chorismate from D-erythrose 4-phosphate and phosphoenolpyruvate: step 5/7. Functionally, catalyzes the specific phosphorylation of the 3-hydroxyl group of shikimic acid using ATP as a cosubstrate. This chain is Shikimate kinase, found in Oceanobacillus iheyensis (strain DSM 14371 / CIP 107618 / JCM 11309 / KCTC 3954 / HTE831).